We begin with the raw amino-acid sequence, 514 residues long: ATP synthase subunit alpha 2 (514 aa).

ATP is bound at residue 170–177; the sequence is GDRQTGKT.

Belongs to the ATPase alpha/beta chains family. As to quaternary structure, F-type ATPases have 2 components, CF(1) - the catalytic core - and CF(0) - the membrane proton channel. CF(1) has five subunits: alpha(3), beta(3), gamma(1), delta(1), epsilon(1). CF(0) has three main subunits: a(1), b(2) and c(9-12). The alpha and beta chains form an alternating ring which encloses part of the gamma chain. CF(1) is attached to CF(0) by a central stalk formed by the gamma and epsilon chains, while a peripheral stalk is formed by the delta and b chains.

It localises to the cell inner membrane. The catalysed reaction is ATP + H2O + 4 H(+)(in) = ADP + phosphate + 5 H(+)(out). Functionally, produces ATP from ADP in the presence of a proton gradient across the membrane. The alpha chain is a regulatory subunit. This chain is ATP synthase subunit alpha 2, found in Hahella chejuensis (strain KCTC 2396).